Here is a 377-residue protein sequence, read N- to C-terminus: Serine protease grass (377 aa).

The N-terminal stretch at 1–26 (MMIASSLAVLYGIAIVSSMGVQSARA) is a signal peptide. The Clip domain maps to 31–89 (DCTTPDGDQGQCMPFSSCRTIEERLTEAQKAGQKVPADYASYLQKALCGEFNGVRHFCC). 6 disulfides stabilise this stretch: Cys-32-Cys-88, Cys-42-Cys-78, Cys-48-Cys-89, Cys-111-Cys-243, Cys-148-Cys-164, and Cys-188-Cys-197. A linker region spans residues 91–118 (SANIQHNSKVMSLFKDENFDCGNFLSQR). Residues 119–373 (VSNGYEVKLS…YVQWITDTMA (255 aa)) enclose the Peptidase S1 domain. The active-site Charge relay system is the His-163. Ca(2+)-binding residues include Glu-179, Arg-181, Thr-184, and Asp-187. The active-site Charge relay system is Asp-223. N-linked (GlcNAc...) asparagine glycans are attached at residues Asn-230 and Asn-270. 2 disulfides stabilise this stretch: Cys-290–Cys-304 and Cys-314–Cys-349. Ser-318 functions as the Charge relay system in the catalytic mechanism.

The protein belongs to the peptidase S1 family. CLIP subfamily. Post-translationally, proteolytically cleaved by a tryspin-like protease which is likely to activate grass.

The protein resides in the secreted. Endopeptidase. Plays a key role in innate immunity by activating the Toll pathway in response to fungal and Gram-positive bacterial infections, presumably downstream of pattern-recognition receptors (PRR), such as PGRP-SA, GNBP1 and GNBP3, and upstream of spz processing enzyme SPE. The polypeptide is Serine protease grass (Drosophila melanogaster (Fruit fly)).